The sequence spans 189 residues: Potassium-transporting ATPase KdpC subunit (189 aa).

The chain crosses the membrane as a helical span at residues 10–30 (VIFAMLTLICGVIYPYAITGI).

Belongs to the KdpC family. The system is composed of three essential subunits: KdpA, KdpB and KdpC.

The protein localises to the cell inner membrane. Part of the high-affinity ATP-driven potassium transport (or Kdp) system, which catalyzes the hydrolysis of ATP coupled with the electrogenic transport of potassium into the cytoplasm. This subunit acts as a catalytic chaperone that increases the ATP-binding affinity of the ATP-hydrolyzing subunit KdpB by the formation of a transient KdpB/KdpC/ATP ternary complex. This chain is Potassium-transporting ATPase KdpC subunit, found in Janthinobacterium sp. (strain Marseille) (Minibacterium massiliensis).